Reading from the N-terminus, the 234-residue chain is Probable transcriptional regulatory protein Psyr_3028 (234 aa).

Belongs to the TACO1 family.

It is found in the cytoplasm. The protein is Probable transcriptional regulatory protein Psyr_3028 of Pseudomonas syringae pv. syringae (strain B728a).